A 475-amino-acid chain; its full sequence is V-type ATP synthase beta chain (475 aa).

This sequence belongs to the ATPase alpha/beta chains family.

Its function is as follows. Produces ATP from ADP in the presence of a proton gradient across the membrane. The V-type beta chain is a regulatory subunit. The sequence is that of V-type ATP synthase beta chain from Anaeromyxobacter dehalogenans (strain 2CP-C).